A 323-amino-acid chain; its full sequence is tRNA U34 carboxymethyltransferase (323 aa).

Carboxy-S-adenosyl-L-methionine-binding positions include K91, W105, K110, G130, D152 to S154, I181 to E182, M196, Y200, and R315.

It belongs to the class I-like SAM-binding methyltransferase superfamily. CmoB family. In terms of assembly, homotetramer.

The enzyme catalyses carboxy-S-adenosyl-L-methionine + 5-hydroxyuridine(34) in tRNA = 5-carboxymethoxyuridine(34) in tRNA + S-adenosyl-L-homocysteine + H(+). In terms of biological role, catalyzes carboxymethyl transfer from carboxy-S-adenosyl-L-methionine (Cx-SAM) to 5-hydroxyuridine (ho5U) to form 5-carboxymethoxyuridine (cmo5U) at position 34 in tRNAs. This is tRNA U34 carboxymethyltransferase from Vibrio parahaemolyticus serotype O3:K6 (strain RIMD 2210633).